The sequence spans 466 residues: Argininosuccinate lyase (466 aa).

This sequence belongs to the lyase 1 family. Argininosuccinate lyase subfamily.

It is found in the cytoplasm. The enzyme catalyses 2-(N(omega)-L-arginino)succinate = fumarate + L-arginine. Its pathway is amino-acid biosynthesis; L-arginine biosynthesis; L-arginine from L-ornithine and carbamoyl phosphate: step 3/3. In Brucella canis (strain ATCC 23365 / NCTC 10854 / RM-666), this protein is Argininosuccinate lyase.